Reading from the N-terminus, the 527-residue chain is Phosphoenolpyruvate carboxykinase (ATP) (527 aa).

Positions 56, 192, and 198 each coordinate substrate. ATP contacts are provided by residues Lys-198, His-217, and 233–241; that span reads GLSGTGKTT. Mn(2+) is bound by residues Lys-198 and His-217. Asp-254 is a binding site for Mn(2+). 3 residues coordinate ATP: Glu-282, Arg-319, and Thr-444. Arg-319 contributes to the substrate binding site.

The protein belongs to the phosphoenolpyruvate carboxykinase (ATP) family. The cofactor is Mn(2+).

It localises to the cytoplasm. It catalyses the reaction oxaloacetate + ATP = phosphoenolpyruvate + ADP + CO2. It functions in the pathway carbohydrate biosynthesis; gluconeogenesis. Functionally, involved in the gluconeogenesis. Catalyzes the conversion of oxaloacetate (OAA) to phosphoenolpyruvate (PEP) through direct phosphoryl transfer between the nucleoside triphosphate and OAA. The sequence is that of Phosphoenolpyruvate carboxykinase (ATP) from Bacillus subtilis (strain 168).